Consider the following 91-residue polypeptide: Small ribosomal subunit protein uS19 (91 aa).

The protein belongs to the universal ribosomal protein uS19 family.

Its function is as follows. Protein S19 forms a complex with S13 that binds strongly to the 16S ribosomal RNA. This is Small ribosomal subunit protein uS19 from Synechococcus sp. (strain RCC307).